A 317-amino-acid chain; its full sequence is Protoheme IX farnesyltransferase (317 aa).

The next 9 helical transmembrane spans lie at 28–48, 53–73, 101–121, 122–142, 150–170, 178–198, 223–243, 246–266, and 282–302; these read IIPL…HGHI, LLIT…LNCI, LIFA…FVNL, LSAC…THWL, IVIG…AVTG, ILFA…ALMI, IWIY…PFQA, LFYA…AWEL, and YSIL…LPAV.

The protein belongs to the UbiA prenyltransferase family. Protoheme IX farnesyltransferase subfamily.

The protein localises to the cell inner membrane. It carries out the reaction heme b + (2E,6E)-farnesyl diphosphate + H2O = Fe(II)-heme o + diphosphate. It functions in the pathway porphyrin-containing compound metabolism; heme O biosynthesis; heme O from protoheme: step 1/1. In terms of biological role, converts heme B (protoheme IX) to heme O by substitution of the vinyl group on carbon 2 of heme B porphyrin ring with a hydroxyethyl farnesyl side group. The polypeptide is Protoheme IX farnesyltransferase (Picosynechococcus sp. (strain ATCC 27264 / PCC 7002 / PR-6) (Agmenellum quadruplicatum)).